The chain runs to 201 residues: Protein TraJ (201 aa).

It is found in the cytoplasm. In terms of biological role, this protein is essential for positively regulating the expression of transfer genes that are involved in the conjugal transfer of DNA between bacterial cells. In Escherichia coli, this protein is Protein TraJ (traJ).